A 201-amino-acid polypeptide reads, in one-letter code: Holliday junction branch migration complex subunit RuvA (201 aa).

Residues 1–63 (MIEFVRGYVD…EDTLALYGFR (63 aa)) form a domain I region. A domain II region spans residues 64-142 (TREERTLFAK…AVTAKTFPDL (79 aa)). Residues 143–153 (FHLQEESARPH) form a flexible linker region. Residues 153 to 201 (HLSALEEAIEALKALGYAEREIQKVVPSLMKENLSTDQYVKRALQQLLK) form a domain III region.

It belongs to the RuvA family. As to quaternary structure, homotetramer. Forms an RuvA(8)-RuvB(12)-Holliday junction (HJ) complex. HJ DNA is sandwiched between 2 RuvA tetramers; dsDNA enters through RuvA and exits via RuvB. An RuvB hexamer assembles on each DNA strand where it exits the tetramer. Each RuvB hexamer is contacted by two RuvA subunits (via domain III) on 2 adjacent RuvB subunits; this complex drives branch migration. In the full resolvosome a probable DNA-RuvA(4)-RuvB(12)-RuvC(2) complex forms which resolves the HJ.

It localises to the cytoplasm. The RuvA-RuvB-RuvC complex processes Holliday junction (HJ) DNA during genetic recombination and DNA repair, while the RuvA-RuvB complex plays an important role in the rescue of blocked DNA replication forks via replication fork reversal (RFR). RuvA specifically binds to HJ cruciform DNA, conferring on it an open structure. The RuvB hexamer acts as an ATP-dependent pump, pulling dsDNA into and through the RuvAB complex. HJ branch migration allows RuvC to scan DNA until it finds its consensus sequence, where it cleaves and resolves the cruciform DNA. The chain is Holliday junction branch migration complex subunit RuvA from Geobacillus sp. (strain WCH70).